The chain runs to 407 residues: Argininosuccinate synthase (407 aa).

ATP is bound by residues 16-24 (AYSGGLDTS) and A44. L-citrulline contacts are provided by Y96 and S101. An ATP-binding site is contributed by G126. The L-aspartate site is built by T128, N132, and D133. An L-citrulline-binding site is contributed by N132. Residues R136, S185, S194, E270, and Y282 each contribute to the L-citrulline site.

The protein belongs to the argininosuccinate synthase family. Type 1 subfamily. In terms of assembly, homotetramer.

Its subcellular location is the cytoplasm. It catalyses the reaction L-citrulline + L-aspartate + ATP = 2-(N(omega)-L-arginino)succinate + AMP + diphosphate + H(+). It functions in the pathway amino-acid biosynthesis; L-arginine biosynthesis; L-arginine from L-ornithine and carbamoyl phosphate: step 2/3. The sequence is that of Argininosuccinate synthase from Shewanella putrefaciens (strain CN-32 / ATCC BAA-453).